A 276-amino-acid chain; its full sequence is Formamidopyrimidine-DNA glycosylase (276 aa).

The active-site Schiff-base intermediate with DNA is Pro2. The active-site Proton donor is the Glu3. Lys58 functions as the Proton donor; for beta-elimination activity in the catalytic mechanism. DNA-binding residues include His92, Arg111, and Arg153. The segment at 238 to 272 (TVYGRERQNCLNCSSTIIKTKHSGRSTFYCRTCQY) adopts an FPG-type zinc-finger fold. The Proton donor; for delta-elimination activity role is filled by Arg262.

This sequence belongs to the FPG family. Monomer. Zn(2+) is required as a cofactor.

The enzyme catalyses Hydrolysis of DNA containing ring-opened 7-methylguanine residues, releasing 2,6-diamino-4-hydroxy-5-(N-methyl)formamidopyrimidine.. It carries out the reaction 2'-deoxyribonucleotide-(2'-deoxyribose 5'-phosphate)-2'-deoxyribonucleotide-DNA = a 3'-end 2'-deoxyribonucleotide-(2,3-dehydro-2,3-deoxyribose 5'-phosphate)-DNA + a 5'-end 5'-phospho-2'-deoxyribonucleoside-DNA + H(+). Functionally, involved in base excision repair of DNA damaged by oxidation or by mutagenic agents. Acts as a DNA glycosylase that recognizes and removes damaged bases. Has a preference for oxidized purines, such as 7,8-dihydro-8-oxoguanine (8-oxoG). Has AP (apurinic/apyrimidinic) lyase activity and introduces nicks in the DNA strand. Cleaves the DNA backbone by beta-delta elimination to generate a single-strand break at the site of the removed base with both 3'- and 5'-phosphates. The protein is Formamidopyrimidine-DNA glycosylase of Rickettsia felis (strain ATCC VR-1525 / URRWXCal2) (Rickettsia azadi).